The chain runs to 239 residues: Ribose-5-phosphate isomerase A (239 aa).

Substrate is bound by residues 34-37 (TGST), 94-97 (DGAD), and 107-110 (KGGG). Residue Glu116 is the Proton acceptor of the active site. Substrate is bound at residue Lys134.

The protein belongs to the ribose 5-phosphate isomerase family. In terms of assembly, homodimer.

The catalysed reaction is aldehydo-D-ribose 5-phosphate = D-ribulose 5-phosphate. It participates in carbohydrate degradation; pentose phosphate pathway; D-ribose 5-phosphate from D-ribulose 5-phosphate (non-oxidative stage): step 1/1. Its function is as follows. Catalyzes the reversible conversion of ribose-5-phosphate to ribulose 5-phosphate. The protein is Ribose-5-phosphate isomerase A of Treponema denticola (strain ATCC 35405 / DSM 14222 / CIP 103919 / JCM 8153 / KCTC 15104).